A 1159-amino-acid polypeptide reads, in one-letter code: ABC transporter G family member 24 (1159 aa).

A run of 2 helical transmembrane segments spans residues 11–31 and 415–435; these read FNSILKSILLLLLLFINGNNC and VGSGVGFIGLTLLIGAIFLIF. Residues 454 to 707 enclose the ABC transporter domain; it reads LSFHNISCYV…FIKQKIAGMT (254 aa). ATP is bound at residue 497 to 504; that stretch reads GLSGSGKT. The tract at residues 752–846 is disordered; sequence QSTSPALSSN…DNNNKNNDDD (95 aa). Low complexity-rich tracts occupy residues 759–768 and 775–784; these read SSNSNNSDIN and INNPHNQNIH. The segment covering 785–795 has biased composition (basic residues); that stretch reads HQQHHHHHRHI. Residues 822-841 are compositionally biased toward low complexity; that stretch reads DNINNNNNNNKVKNNDNNNK. In terms of domain architecture, ABC transmembrane type-2 spans 902-1154; the sequence is FLLRTTYFVH…LLAYVFLRFL (253 aa). 6 consecutive transmembrane segments (helical) span residues 909–929, 937–957, 1005–1025, 1047–1067, 1074–1094, and 1135–1155; these read FVHIFVGLTLGYLFWKLPANL, FGAMFFMTALLSFGSITSLDL, YMIGLRPGILHFIYFLISLVL, ANMVSILLLFVFLLFDGFLLA, YLIGLVWISFMSYGLEIPVVN, and VLLGMIVGYLLLAYVFLRFLV.

The protein belongs to the ABC transporter superfamily. ABCG family. Eye pigment precursor importer (TC 3.A.1.204) subfamily.

It is found in the membrane. This is ABC transporter G family member 24 (abcG24) from Dictyostelium discoideum (Social amoeba).